We begin with the raw amino-acid sequence, 417 residues long: Serine hydroxymethyltransferase (417 aa).

(6S)-5,6,7,8-tetrahydrofolate is bound by residues Leu120 and 124-126; that span reads GHL. Lys229 carries the N6-(pyridoxal phosphate)lysine modification.

This sequence belongs to the SHMT family. As to quaternary structure, homodimer. The cofactor is pyridoxal 5'-phosphate.

The protein localises to the cytoplasm. It carries out the reaction (6R)-5,10-methylene-5,6,7,8-tetrahydrofolate + glycine + H2O = (6S)-5,6,7,8-tetrahydrofolate + L-serine. It participates in one-carbon metabolism; tetrahydrofolate interconversion. The protein operates within amino-acid biosynthesis; glycine biosynthesis; glycine from L-serine: step 1/1. Functionally, catalyzes the reversible interconversion of serine and glycine with tetrahydrofolate (THF) serving as the one-carbon carrier. This reaction serves as the major source of one-carbon groups required for the biosynthesis of purines, thymidylate, methionine, and other important biomolecules. Also exhibits THF-independent aldolase activity toward beta-hydroxyamino acids, producing glycine and aldehydes, via a retro-aldol mechanism. The chain is Serine hydroxymethyltransferase from Anaeromyxobacter sp. (strain Fw109-5).